The following is a 277-amino-acid chain: Uridine-cytidine kinase 1 (277 aa).

Residues 1-30 form a disordered region; the sequence is MASAGGEDCESPAPEADRPHQRPFLIGVSG. 30-38 provides a ligand contact to ATP; sequence GGTASGKST. Residue D65 is part of the active site. Positions 87, 115, 120, 169, 178, and 186 each coordinate substrate. D215 contributes to the ATP binding site. Positions 247–277 are disordered; that stretch reads SYKRTFSEPGDHPGMLTSGKRSHLESSSRPH. At T251 the chain carries Phosphothreonine. Residue S253 is modified to Phosphoserine. The segment covering 268–277 has biased composition (basic and acidic residues); that stretch reads SHLESSSRPH.

The protein belongs to the uridine kinase family. As to expression, ubiquitous.

It carries out the reaction uridine + ATP = UMP + ADP + H(+). The catalysed reaction is cytidine + ATP = CMP + ADP + H(+). It participates in pyrimidine metabolism; CTP biosynthesis via salvage pathway; CTP from cytidine: step 1/3. Its pathway is pyrimidine metabolism; UMP biosynthesis via salvage pathway; UMP from uridine: step 1/1. Phosphorylates uridine and cytidine to uridine monophosphate and cytidine monophosphate. Does not phosphorylate deoxyribonucleosides or purine ribonucleosides. Can use ATP or GTP as a phosphate donor. Can also phosphorylate cytidine and uridine nucleoside analogs such as 6-azauridine, 5-fluorouridine, 4-thiouridine, 5-bromouridine, N(4)-acetylcytidine, N(4)-benzoylcytidine, 5-fluorocytidine, 2-thiocytidine, 5-methylcytidine, and N(4)-anisoylcytidine. This is Uridine-cytidine kinase 1 (UCK1) from Homo sapiens (Human).